Reading from the N-terminus, the 328-residue chain is Sterol demethylase protein B (328 aa).

Belongs to the NAD(P)-dependent epimerase/dehydratase family.

The enzyme catalyses a 3beta-hydroxy-4alpha-methylsteroid-4beta-carboxylate + NAD(+) = a 4alpha-methyl-3-oxosteroid + CO2 + NADH. It carries out the reaction a 3beta-hydroxy-4alpha-methylsteroid-4beta-carboxylate + NADP(+) = a 4alpha-methyl-3-oxosteroid + CO2 + NADPH. It catalyses the reaction 4beta-carboxy-4alpha-methyl-5alpha-cholesta-8,24-dien-3beta-ol + NAD(+) = 3-dehydro-4alpha-methylzymosterol + CO2 + NADH. The catalysed reaction is 4beta-carboxy-4alpha-methyl-5alpha-cholesta-8,24-dien-3beta-ol + NADP(+) = 3-dehydro-4alpha-methylzymosterol + CO2 + NADPH. The enzyme catalyses 3-dehydro-4alpha-methylzymosterol + NADPH + H(+) = 4alpha-methylzymosterol + NADP(+). It functions in the pathway steroid biosynthesis; sterol biosynthesis. In terms of biological role, participates in the biosynthesis of bacterial sterols. Together with SdmA, removes one methyl group from the C-4 position of 4,4-dimethylated steroid molecules. SdmB catalyzes an oxidative decarboxylation that results in reduction of the 3beta-hydroxy group at the C-3 carbon to an oxo group. It also functions as a ketoreductase that converts the C-3 oxo group back to a hydroxyl group after C-4 demethylation. In Methylococcus capsulatus (strain ATCC 33009 / NCIMB 11132 / Bath), this protein is Sterol demethylase protein B.